Consider the following 1372-residue polypeptide: DNA-directed RNA polymerase subunit beta (1372 aa).

The protein belongs to the RNA polymerase beta chain family. The RNAP catalytic core consists of 2 alpha, 1 beta, 1 beta' and 1 omega subunit. When a sigma factor is associated with the core the holoenzyme is formed, which can initiate transcription.

It catalyses the reaction RNA(n) + a ribonucleoside 5'-triphosphate = RNA(n+1) + diphosphate. DNA-dependent RNA polymerase catalyzes the transcription of DNA into RNA using the four ribonucleoside triphosphates as substrates. The protein is DNA-directed RNA polymerase subunit beta of Rickettsia bellii (strain RML369-C).